A 346-amino-acid polypeptide reads, in one-letter code: Protein NDL1 (346 aa).

The protein belongs to the NDRG family. In terms of assembly, interacts with GB1. Interacts with the heterodimers formed by GB1 and GG1, or GB1 and GG2. Interacts with RGS1. Expressed in root vasculature, cotyledons, leaves, petals, mature stamens and pollen grains.

The protein resides in the cytoplasm. Interacts with the heterotrimeric G protein beta subunit GB1 and plays an significant role in GB1-dependent regulation of lateral root formation. Involved in a signaling pathway that modulates root auxin transport and auxin gradients. Acts partially by positively regulating the auxin carrier PIN2 and AUX1. Acts, together with GB1 as positive regulator of meristem initiation and branching. GB1 and NDL1 positively regulate basipetal inflorescence auxin transport and modulate MAX2 expression in shoots, which regulates organ and lateral meristem formation by the establishment and maintenance of auxin gradients. The chain is Protein NDL1 from Arabidopsis thaliana (Mouse-ear cress).